A 334-amino-acid chain; its full sequence is DNA-directed RNA polymerase subunit alpha (334 aa).

Positions 1-234 are alpha N-terminal domain (alpha-NTD); the sequence is MQTKVNELLK…SQLAAFVELQ (234 aa). The interval 248 to 334 is alpha C-terminal domain (alpha-CTD); sequence IDPILLRPVD…LKDQDKKASG (87 aa).

The protein belongs to the RNA polymerase alpha chain family. Homodimer. The RNAP catalytic core consists of 2 alpha, 1 beta, 1 beta' and 1 omega subunit. When a sigma factor is associated with the core the holoenzyme is formed, which can initiate transcription.

The enzyme catalyses RNA(n) + a ribonucleoside 5'-triphosphate = RNA(n+1) + diphosphate. In terms of biological role, DNA-dependent RNA polymerase catalyzes the transcription of DNA into RNA using the four ribonucleoside triphosphates as substrates. This Thioalkalivibrio sulfidiphilus (strain HL-EbGR7) protein is DNA-directed RNA polymerase subunit alpha.